A 213-amino-acid chain; its full sequence is DELTA-actitoxin-Aas1a (213 aa).

The N-terminal stretch at 1 to 19 is a signal peptide; sequence MSRLIIAFIVVTMVCSAIA. A propeptide spanning residues 20-34 is cleaved from the precursor; it reads LPKKKVEPLEKDEKR. The tract at residues 37–46 is plays an important role in the hemolytic activity; sequence AVAGAVIEGG. The N-terminal region stretch occupies residues 45 to 64; sequence GGNLVMSVLDRILEAIGDVN. Ser88, Val121, Ser139, Pro141, Tyr167, Tyr171, and Tyr172 together coordinate phosphocholine. Positions 139-154 are trp-rich region, which is important for the binding to lipid membrane; sequence SIPYDYNLYSNWWNVK. The Cell attachment site, crucial for protein stability motif lies at 178–180; sequence KGD.

This sequence belongs to the actinoporin family. Sea anemone subfamily. Octamer or nonamer in membranes. Monomer in the soluble state.

It is found in the secreted. Its subcellular location is the nematocyst. It localises to the target cell membrane. Its function is as follows. Pore-forming protein that forms cation-selective hydrophilic pores of around 1 nm and causes cytolysis. Pore formation is a multi-step process that involves specific recognition of membrane sphingomyelin (but neither cholesterol nor phosphatidylcholine) using aromatic rich region and adjacent phosphocholine (POC) binding site, firm binding to the membrane (mainly driven by hydrophobic interactions) accompanied by the transfer of the N-terminal region to the lipid-water interface and finally pore formation after oligomerization of monomers. This protein shows potent hemolytic activity (EC(50)=8.8 ng/ml) that is specifically inhibited by sphingomyelin. Shows no phospholipase A2 activity, nor antimicrobial activity against the four bacteria tested. Is lethal to crayfish. This chain is DELTA-actitoxin-Aas1a, found in Anthopleura asiatica (Sea anemone).